The chain runs to 349 residues: Heat-inducible transcription repressor HrcA (349 aa).

This sequence belongs to the HrcA family.

Functionally, negative regulator of class I heat shock genes (grpE-dnaK-dnaJ and groELS operons). Prevents heat-shock induction of these operons. This chain is Heat-inducible transcription repressor HrcA, found in Mycoplasmoides gallisepticum (strain R(low / passage 15 / clone 2)) (Mycoplasma gallisepticum).